Here is a 373-residue protein sequence, read N- to C-terminus: Chaperone protein DnaJ (373 aa).

In terms of domain architecture, J spans 5–69; the sequence is DYYEVLGVNK…NKRVNYDQFG (65 aa). The CR-type zinc-finger motif lies at 130 to 212; sequence GTKKEISIKK…CKGKGTENKT (83 aa). Zn(2+) contacts are provided by Cys143, Cys146, Cys160, Cys163, Cys186, Cys189, Cys200, and Cys203. 4 CXXCXGXG motif repeats span residues 143–150, 160–167, 186–193, and 200–207; these read CHTCNGDG, CSYCNGAG, CPKCEGSG, and CPTCKGKG.

It belongs to the DnaJ family. Homodimer. It depends on Zn(2+) as a cofactor.

It localises to the cytoplasm. Functionally, participates actively in the response to hyperosmotic and heat shock by preventing the aggregation of stress-denatured proteins and by disaggregating proteins, also in an autonomous, DnaK-independent fashion. Unfolded proteins bind initially to DnaJ; upon interaction with the DnaJ-bound protein, DnaK hydrolyzes its bound ATP, resulting in the formation of a stable complex. GrpE releases ADP from DnaK; ATP binding to DnaK triggers the release of the substrate protein, thus completing the reaction cycle. Several rounds of ATP-dependent interactions between DnaJ, DnaK and GrpE are required for fully efficient folding. Also involved, together with DnaK and GrpE, in the DNA replication of plasmids through activation of initiation proteins. This is Chaperone protein DnaJ from Staphylococcus epidermidis (strain ATCC 35984 / DSM 28319 / BCRC 17069 / CCUG 31568 / BM 3577 / RP62A).